The following is a 232-amino-acid chain: Small ribosomal subunit protein uS2 (232 aa).

It belongs to the universal ribosomal protein uS2 family.

This Baumannia cicadellinicola subsp. Homalodisca coagulata protein is Small ribosomal subunit protein uS2.